Consider the following 126-residue polypeptide: C-type natriuretic peptide (126 aa).

An N-terminal signal peptide occupies residues 1–23; it reads MHLSQLIACALLLALLSLRPSEA. The disordered stretch occupies residues 19–71; the sequence is RPSEAKPGTPPKVPRTPPGEELAEPQAAGGNQKKGDKTPGGGGANLKGDRSRL. Positions 24 to 73 are excised as a propeptide; sequence KPGTPPKVPRTPPGEELAEPQAAGGNQKKGDKTPGGGGANLKGDRSRLLR. Residues 26 to 35 show a composition bias toward pro residues; sequence GTPPKVPRTP. C110 and C126 form a disulfide bridge.

Belongs to the natriuretic peptide family. Post-translationally, degraded by IDE (in vitro). Expressed exclusively in brain.

The protein localises to the secreted. Hormone which plays a role in endochondral ossification through regulation of cartilaginous growth plate chondrocytes proliferation and differentiation. May also be vasoactive and natriuretic. Acts by specifically binding and stimulating NPR2 to produce cGMP. Binds the clearance receptor NPR3. The polypeptide is C-type natriuretic peptide (Nppc) (Rattus norvegicus (Rat)).